A 495-amino-acid polypeptide reads, in one-letter code: Amidophosphoribosyltransferase (495 aa).

Residues 1-22 (MFPPSSDLTELNDGQPLSGHHA) form a disordered region. A propeptide spanning residues 1–28 (MFPPSSDLTELNDGQPLSGHHADKPEEA) is cleaved from the precursor. The Nucleophile role is filled by Cys-29. Positions 29 to 254 (CGVFGIYAPE…AGELVHITES (226 aa)) constitute a Glutamine amidotransferase type-2 domain. [4Fe-4S] cluster is bound at residue Cys-270. Ser-317, Asp-379, and Asp-380 together coordinate Mg(2+). 3 residues coordinate [4Fe-4S] cluster: Cys-416, Cys-467, and Cys-470.

In the C-terminal section; belongs to the purine/pyrimidine phosphoribosyltransferase family. Requires Mg(2+) as cofactor. [4Fe-4S] cluster serves as cofactor.

It carries out the reaction 5-phospho-beta-D-ribosylamine + L-glutamate + diphosphate = 5-phospho-alpha-D-ribose 1-diphosphate + L-glutamine + H2O. The protein operates within purine metabolism; IMP biosynthesis via de novo pathway; N(1)-(5-phospho-D-ribosyl)glycinamide from 5-phospho-alpha-D-ribose 1-diphosphate: step 1/2. Its function is as follows. Catalyzes the formation of phosphoribosylamine from phosphoribosylpyrophosphate (PRPP) and glutamine. The chain is Amidophosphoribosyltransferase from Synechocystis sp. (strain ATCC 27184 / PCC 6803 / Kazusa).